The chain runs to 183 residues: Adenine phosphoribosyltransferase (183 aa).

This sequence belongs to the purine/pyrimidine phosphoribosyltransferase family. Homodimer.

It is found in the cytoplasm. The enzyme catalyses AMP + diphosphate = 5-phospho-alpha-D-ribose 1-diphosphate + adenine. Its pathway is purine metabolism; AMP biosynthesis via salvage pathway; AMP from adenine: step 1/1. Its function is as follows. Catalyzes a salvage reaction resulting in the formation of AMP, that is energically less costly than de novo synthesis. In Shewanella piezotolerans (strain WP3 / JCM 13877), this protein is Adenine phosphoribosyltransferase.